The following is a 297-amino-acid chain: Tyrosine recombinase XerD (297 aa).

Positions 2-86 (KKLDPIIEQF…CLRKFFRFLC (85 aa)) constitute a Core-binding (CB) domain. Positions 107 to 291 (QLPKSLSEEQ…AKTRLKSIHK (185 aa)) constitute a Tyr recombinase domain. Catalysis depends on residues Arg-147, Lys-171, His-243, Arg-246, and His-269. The O-(3'-phospho-DNA)-tyrosine intermediate role is filled by Tyr-278.

This sequence belongs to the 'phage' integrase family. XerD subfamily. Forms a cyclic heterotetrameric complex composed of two molecules of XerC and two molecules of XerD.

The protein localises to the cytoplasm. In terms of biological role, site-specific tyrosine recombinase, which acts by catalyzing the cutting and rejoining of the recombining DNA molecules. The XerC-XerD complex is essential to convert dimers of the bacterial chromosome into monomers to permit their segregation at cell division. It also contributes to the segregational stability of plasmids. The chain is Tyrosine recombinase XerD from Haemophilus ducreyi (strain 35000HP / ATCC 700724).